A 1153-amino-acid chain; its full sequence is uncharacterized protein (1153 aa).

Disordered regions lie at residues 164 to 193, 224 to 245, 294 to 316, 332 to 427, 613 to 648, 683 to 703, 717 to 740, 772 to 819, 838 to 874, and 942 to 1106; these read TTIKQLPPPLPQPQPQPHQQQPHNKKQIDD, DNYDDIDNNNNNNNNSNNDDDK, KSPQKLKLQQQQQQQQQQKQSKH, EHKL…KNKK, LSMLDSTNDGSSQEYEEEEEEEKNQKNFEKEEEGEN, QQQQQEKEKQQQEKQQDEEMS, KSDDNNNNNDNNNNNNNNQTSKRK, NKKL…KTIE, ASSGGSNNNNNNDQNDSITTKEKERSETIKTHNEDEK, and NNNN…NNEV. A compositionally biased stretch (pro residues) spans 169 to 179; sequence LPPPLPQPQPQ. Low complexity-rich tracts occupy residues 231-240, 298-312, 336-391, and 399-423; these read NNNNNNNNSN, KLKLQQQQQQQQQQK, QQQQ…TPKK, and NNVNNNNNNNNNNNNNNNNNNNNNN. The segment covering 613 to 625 has biased composition (polar residues); it reads LSMLDSTNDGSSQ. Positions 687–699 are enriched in basic and acidic residues; sequence QEKEKQQQEKQQD. Low complexity predominate over residues 721 to 734; sequence NNNNNDNNNNNNNN. Residues 772 to 784 are compositionally biased toward basic and acidic residues; sequence NKKLRVDSEDQQT. Low complexity-rich tracts occupy residues 788 to 808 and 839 to 854; these read TTTTTTTTTTTNTNNNNNNNN and SSGGSNNNNNNDQNDS. Residues 856–874 show a composition bias toward basic and acidic residues; the sequence is TTKEKERSETIKTHNEDEK. Residues 942–987 are compositionally biased toward low complexity; it reads NNNNNNNNNINNINNIGNKNTTVNNSNHSNHSNNNINNNNIFKNSN. 2 stretches are compositionally biased toward polar residues: residues 988-998 and 1005-1015; these read PIVDTNFSSTT and QSKIFTGNQLP. A compositionally biased stretch (low complexity) spans 1019 to 1059; sequence INNENVVNNNNNNEINNTTTTTTNNNSGIHKNNNNYNSDNS. Residues 1064 to 1081 are compositionally biased toward basic and acidic residues; sequence DGLKQEKEEQKEEQKENK. Residues 1082 to 1105 show a composition bias toward low complexity; sequence NNNNNNNNNNNNNNNNNNNNNNNE.

This is an uncharacterized protein from Dictyostelium discoideum (Social amoeba).